A 160-amino-acid chain; its full sequence is Cytochrome b6-f complex subunit 4 (160 aa).

The next 3 helical transmembrane spans lie at 36 to 56 (LLYI…GLSV), 95 to 115 (LLGV…PFIE), and 131 to 151 (TVFL…ALPI).

The protein belongs to the cytochrome b family. PetD subfamily. In terms of assembly, the 4 large subunits of the cytochrome b6-f complex are cytochrome b6, subunit IV (17 kDa polypeptide, petD), cytochrome f and the Rieske protein, while the 4 small subunits are petG, petL, petM and petN. The complex functions as a dimer.

It localises to the plastid. The protein resides in the chloroplast thylakoid membrane. Component of the cytochrome b6-f complex, which mediates electron transfer between photosystem II (PSII) and photosystem I (PSI), cyclic electron flow around PSI, and state transitions. This chain is Cytochrome b6-f complex subunit 4, found in Chlorella vulgaris (Green alga).